Reading from the N-terminus, the 155-residue chain is Small ribosomal subunit protein uS7c (155 aa).

This sequence belongs to the universal ribosomal protein uS7 family. Part of the 30S ribosomal subunit.

The protein resides in the plastid. The protein localises to the chloroplast. Its function is as follows. One of the primary rRNA binding proteins, it binds directly to 16S rRNA where it nucleates assembly of the head domain of the 30S subunit. The sequence is that of Small ribosomal subunit protein uS7c (rps7) from Dioscorea bulbifera (Air potato).